The chain runs to 452 residues: Maltoporin (452 aa).

The N-terminal stretch at 1-25 (MMITLRKLPLAVAVAAGVMSAQAMA) is a signal peptide.

Belongs to the porin LamB (TC 1.B.3) family. Homotrimer formed of three 18-stranded antiparallel beta-barrels, containing three independent channels.

It is found in the cell outer membrane. It carries out the reaction beta-maltose(in) = beta-maltose(out). Involved in the transport of maltose and maltodextrins. The polypeptide is Maltoporin (Salmonella heidelberg (strain SL476)).